Consider the following 1522-residue polypeptide: DNA topoisomerase 2-binding protein 1 (1522 aa).

BRCT domains lie at 101-189 and 195-284; these read VYNM…RYTD and FKCP…IYKT. Thr298 bears the Phosphothreonine mark. A Phosphoserine modification is found at Ser301. 3 consecutive BRCT domains span residues 354–444, 548–633, and 641–738; these read APED…PYIH, TEEG…SNPL, and TGMT…HFLI. Residues 756-891 form an interaction with CIP2A region; that stretch reads INLNSDTAEH…AVALSASPQL (136 aa). A phosphothreonine mark is found at Thr779 and Thr848. A Nuclear localization signal motif is present at residues 852-858; that stretch reads PSQQKRK. Ser860 bears the Phosphoserine mark. Thr861 carries the post-translational modification Phosphothreonine. 3 positions are modified to phosphoserine: Ser864, Ser886, and Ser888. In terms of domain architecture, BRCT 6 spans 900–991; sequence EAPKPLHKVV…KHLPESLYPH (92 aa). Phosphoserine is present on Ser1002. The disordered stretch occupies residues 1018 to 1058; it reads VSSTKDDEPDPLILEENDVDNMATNNKESAPSNGSGKNDSK. Residues 1024–1036 are compositionally biased toward acidic residues; that stretch reads DEPDPLILEENDV. Residues 1039–1058 are compositionally biased toward polar residues; the sequence is MATNNKESAPSNGSGKNDSK. Thr1062 and Thr1064 each carry phosphothreonine. Residues 1083–1114 are compositionally biased toward polar residues; that stretch reads SIVKPQGQRTSLSRSGCNSASSTPDSTRSARS. A disordered region spans residues 1083–1118; that stretch reads SIVKPQGQRTSLSRSGCNSASSTPDSTRSARSGRSR. 2 consecutive BRCT domains span residues 1259-1351 and 1389-1486; these read ETHE…DYEW and IVEG…NYCL. Residues 1501–1522 are disordered; sequence TGLSQKRKAPTEKNKIKRPRVH. Residue Ser1504 is modified to Phosphoserine. The Nuclear localization signal motif lies at 1517 to 1520; it reads KRPR.

This sequence belongs to the TOPBP1 family. Interacts (via BRCT domains 1 and 2) with (phosphorylated) MDC1; promoting TOPBP1 recruitment to DNA damage sites during mitosis. Interacts (via BRCT domains 7 and 8) with (autophosphorylated) ATR; promoting activation of ATR. Interacts (via BRCT domains 7 and 8) with (phosphorylated) POLQ; specifically binds POLQ phosphorylated by PLK1, promoting POLQ recruitment to DNA damage sites. Interacts (via BRCT domains 1 and 2) with (phosphorylated) RAD9A. Interacts (via BRCT domain 2) with (phosphorylated) TP53BP1. Interacts (via BRCT domain 2) with (phosphorylated) HTATSF1. Interacts (via BRCT domains 7 and 8) with (phosphorylated) RAD51; promoting RAD51 recruitment to damaged chromatin. Interacts with CIP2A; forming the CIP2A-TOPBP1 complex. Interacts with POLE. Interacts with UBR5. Interacts with E2F1. Interacts with PML. Interacts with SMARCA2. Interacts with SMARCA4. Interacts with RHNO1. May interact with TOP2B. Interacts with TICRR. Interacts with HELB. Interacts (via residues 1233-1522) with RECQL4. Phosphorylated on serine and threonine residues in response to X-ray irradiation. In terms of processing, ubiquitinated and degraded by the proteasome. X-ray irradiation reduces ubiquitination. Deubiquitinated by USP13; leading to TOPBP1 stabilizion and activation of the ATR-TOPBP1 axis pathway. As to expression, highly expressed in heart, brain, placenta, lung and kidney.

The protein resides in the nucleus. It is found in the chromosome. It localises to the cytoplasm. Its subcellular location is the cytoskeleton. The protein localises to the microtubule organizing center. The protein resides in the centrosome. It is found in the spindle pole. Scaffold protein that acts as a key protein-protein adapter in DNA replication and DNA repair. Composed of multiple BRCT domains, which specifically recognize and bind phosphorylated proteins, bringing proteins together into functional combinations. Required for DNA replication initiation but not for the formation of pre-replicative complexes or the elongation stages. Necessary for the loading of replication factors onto chromatin, including GMNC, CDC45, DNA polymerases and components of the GINS complex. Plays a central role in DNA repair by bridging proteins and promoting recruitment of proteins to DNA damage sites. Involved in double-strand break (DSB) repair via homologous recombination in S-phase by promoting the exchange between the DNA replication factor A (RPA) complex and RAD51. Mechanistically, TOPBP1 is recruited to DNA damage sites in S-phase via interaction with phosphorylated HTATSF1, and promotes the loading of RAD51, thereby facilitating RAD51 nucleofilaments formation and RPA displacement, followed by homologous recombination. Involved in microhomology-mediated end-joining (MMEJ) DNA repair by promoting recruitment of polymerase theta (POLQ) to DNA damage sites during mitosis. MMEJ is an alternative non-homologous end-joining (NHEJ) machinery that takes place during mitosis to repair DSBs in DNA that originate in S-phase. Recognizes and binds POLQ phosphorylated by PLK1, enabling its recruitment to DSBs for subsequent repair. Involved in G1 DNA damage checkpoint by acting as a molecular adapter that couples TP53BP1 and the 9-1-1 complex. In response to DNA damage, triggers the recruitment of checkpoint signaling proteins on chromatin, which activate the CHEK1 signaling pathway and block S-phase progression. Acts as an activator of the kinase activity of ATR. Also required for chromosomal stability when DSBs occur during mitosis by forming filamentous assemblies that bridge MDC1 and tether broken chromosomes during mitosis. Together with CIP2A, plays an essential role in the response to genome instability generated by the presence of acentric chromosome fragments derived from shattered chromosomes within micronuclei. Micronuclei, which are frequently found in cancer cells, consist of chromatin surrounded by their own nuclear membrane: following breakdown of the micronuclear envelope, a process associated with chromothripsis, the CIP2A-TOPBP1 complex tethers chromosome fragments during mitosis to ensure clustered segregation of the fragments to a single daughter cell nucleus, facilitating re-ligation with limited chromosome scattering and loss. Recruits the SWI/SNF chromatin remodeling complex to E2F1-responsive promoters, thereby down-regulating E2F1 activity and inhibiting E2F1-dependent apoptosis during G1/S transition and after DNA damage. The sequence is that of DNA topoisomerase 2-binding protein 1 from Homo sapiens (Human).